Consider the following 418-residue polypeptide: Gamma-glutamyl phosphate reductase (418 aa).

The protein belongs to the gamma-glutamyl phosphate reductase family.

The protein localises to the cytoplasm. It carries out the reaction L-glutamate 5-semialdehyde + phosphate + NADP(+) = L-glutamyl 5-phosphate + NADPH + H(+). The protein operates within amino-acid biosynthesis; L-proline biosynthesis; L-glutamate 5-semialdehyde from L-glutamate: step 2/2. Catalyzes the NADPH-dependent reduction of L-glutamate 5-phosphate into L-glutamate 5-semialdehyde and phosphate. The product spontaneously undergoes cyclization to form 1-pyrroline-5-carboxylate. This Geotalea uraniireducens (strain Rf4) (Geobacter uraniireducens) protein is Gamma-glutamyl phosphate reductase.